The primary structure comprises 576 residues: G protein-coupled receptor kinase 6 (576 aa).

The tract at residues 1 to 185 (MELENIVANT…LERQPVTKNT (185 aa)) is N-terminal. The RGS domain occupies 53–171 (YHSLCERQPI…LDSIYFNRFL (119 aa)). A Protein kinase domain is found at 186-448 (FRQYRVLGKG…AREVKEHPLF (263 aa)). Residues 192–200 (LGKGGFGEV), Lys-215, and 264–270 (TLMNGGD) each bind ATP. The Proton acceptor role is filled by Asp-311. Residue 315 to 318 (ENIL) participates in ATP binding. The AGC-kinase C-terminal domain occupies 449–514 (KKLNFKRLGA…GSVSIPWQNE (66 aa)). The residue at position 484 (Ser-484) is a Phosphoserine. Phosphothreonine is present on Thr-485. Residues Cys-561, Cys-562, and Cys-565 are each lipidated (S-palmitoyl cysteine). Ser-566 and Ser-568 each carry phosphoserine.

Belongs to the protein kinase superfamily. AGC Ser/Thr protein kinase family. GPRK subfamily. In terms of assembly, interacts with GIT1. As to expression, expressed in the brain in striatal neurons.

The protein localises to the membrane. It carries out the reaction [G-protein-coupled receptor] + ATP = [G-protein-coupled receptor]-phosphate + ADP + H(+). Functionally, specifically phosphorylates the activated forms of G protein-coupled receptors. Such receptor phosphorylation initiates beta-arrestin-mediated receptor desensitization, internalization, and signaling events leading to their desensitization. Seems to be involved in the desensitization of D2-like dopamine receptors in striatum and chemokine receptor CXCR4 which is critical for CXCL12-induced cell chemotaxis. Phosphorylates rhodopsin (RHO) (in vitro) and a non G-protein-coupled receptor, LRP6 during Wnt signaling (in vitro). This is G protein-coupled receptor kinase 6 (Grk6) from Mus musculus (Mouse).